Here is a 459-residue protein sequence, read N- to C-terminus: MIKDPFERLGLDREVLTVSQLNGRARVLLEDVFRSVWVEGEISNLARPASGHMYFTLKDSGAQIRCALFRQNALRVRQALRDGLAVRVRGKVSLFEGRGDYQLILDTVEPAGDGALRLAFEALKEKLGAEGLFSTERKRPLPAHPQRIGIITSPTGAVIRDIISVFRRRAPQVELNLIPTAVQGREAINQIVRALQMADRQGFDALILARGGGSLEDLWCFNEEAVARAVAACVTPIVSAVGHETDVSISDFVADVRAPTPSAAAELLAPDSSGLQQRLDSLQRRLLLRMQSRLAHDRLRVEGLARRLRHPGERLRQQAQRLDDLDMRLRRAFALNMNQRHERLGRLDTRLAAQHPGRSLKLLKQRLDSLAERLPKAMRDVLKDRRQRFQAQLQTLQVVSPLATLARGYSILLDEHGQAIRSAAQTHNGQRLTARLNEGELKVRVEDNHQTPVTLSLLD.

It belongs to the XseA family. Heterooligomer composed of large and small subunits.

The protein resides in the cytoplasm. The enzyme catalyses Exonucleolytic cleavage in either 5'- to 3'- or 3'- to 5'-direction to yield nucleoside 5'-phosphates.. In terms of biological role, bidirectionally degrades single-stranded DNA into large acid-insoluble oligonucleotides, which are then degraded further into small acid-soluble oligonucleotides. This is Exodeoxyribonuclease 7 large subunit from Pseudomonas entomophila (strain L48).